The following is a 652-amino-acid chain: Regulator of DNA class I crossover intermediates 1 (652 aa).

A DNA-binding region (binds DNA containing a D-loop) is located at residues 1–228 (MNWVGGSRSR…APYKRTNSSE (228 aa)). 2 disordered regions span residues 464 to 512 (YLES…KATE) and 621 to 652 (EKESSHPEAGSCTEDRTADTTGGQETPTSNSL). Residues 467–477 (SSQSSQSASYS) are compositionally biased toward low complexity. 2 stretches are compositionally biased toward polar residues: residues 478–491 (PRPTESTFSSSTDL) and 639–652 (DTTGGQETPTSNSL).

As to quaternary structure, interacts with MSH5. Interacts with TEX11. In terms of tissue distribution, expressed mainly in testis (at protein level). Expressed in spermatogonia and enriched in spermatocytes; absent in testicular somatic cells (at protein level). No expression or low levels in other tissues.

The protein localises to the chromosome. In terms of biological role, involved in recombination, probably acting by stabilizing recombination intermediates during meiotic crossover formation. Required for normal germline development and fertility. Required for meiotic progression, complete chromosomal synapsis and crossover formation. Binds double-stranded DNA. However, also binds branched DNA molecules, such as those containing a D-loop or Holliday junction structure. Probably not required for formation of DNA double-strand breaks (DSBs). Also binds RNA in an RNA structure-independent manner, with a preference for binding 3'-UTR regions of mRNAs; may stabilize bound RNAs. This Mus musculus (Mouse) protein is Regulator of DNA class I crossover intermediates 1.